The following is a 381-amino-acid chain: MADAVILGIESSCDETAAAVIRNGAEILSSVVFSQIYTHMRYGGVVPELASREHLKAIVPVVRQAVEDAGQSYDKIDAIAVTRGPGLAGALLVGVSYAKALSFALDKPLIGVNHLEGHIHVVLLEQKQQGVGEIQFPVLALVVSGGHTHLYLAEKKDAGWTYRDVGHTRDDAAGEAYDKVAKLLGLGYPGGPILDGLAKHGDPRAVRFPFAQIKHRDRNPQNRHEDDDARVDFSYSGIKTAVLRYVETHEMKAAIEARRTALKEIEKPSQDDYLRVCDRQTLDLIASFQRAVVNDLVSKALHAAAENNAATLLVTGGVAANSELRETFERRAGELGLPVYFPSRPLSTDNAAMIAAAAYPRFLSGEFAAPDLSAEANLRLR.

2 residues coordinate Fe cation: H114 and H118. Residues 142-146, D178, G191, D195, and N321 each bind substrate; that span reads VVSGG. D349 lines the Fe cation pocket.

It belongs to the KAE1 / TsaD family. Fe(2+) is required as a cofactor.

Its subcellular location is the cytoplasm. It catalyses the reaction L-threonylcarbamoyladenylate + adenosine(37) in tRNA = N(6)-L-threonylcarbamoyladenosine(37) in tRNA + AMP + H(+). In terms of biological role, required for the formation of a threonylcarbamoyl group on adenosine at position 37 (t(6)A37) in tRNAs that read codons beginning with adenine. Is involved in the transfer of the threonylcarbamoyl moiety of threonylcarbamoyl-AMP (TC-AMP) to the N6 group of A37, together with TsaE and TsaB. TsaD likely plays a direct catalytic role in this reaction. The protein is tRNA N6-adenosine threonylcarbamoyltransferase of Koribacter versatilis (strain Ellin345).